We begin with the raw amino-acid sequence, 516 residues long: uncharacterized protein (516 aa).

The signal sequence occupies residues M1 to S22. A lipid anchor (N-palmitoyl cysteine) is attached at C23. C23 is lipidated: S-diacylglycerol cysteine.

The protein belongs to the MG067/MG068/MG395 family.

Its subcellular location is the cell membrane. This is an uncharacterized protein from Mycoplasma genitalium (strain ATCC 33530 / DSM 19775 / NCTC 10195 / G37) (Mycoplasmoides genitalium).